A 221-amino-acid chain; its full sequence is Protein-disulfide oxidoreductase DsbI (221 aa).

Residues 27–47 (FLWLLMAVAMGGLIILAHSFF) traverse the membrane as a helical segment. A disulfide bridge connects residues cysteine 56 and cysteine 59. The next 2 membrane-spanning stretches (helical) occupy residues 64 to 84 (FAMF…KNII) and 85 to 105 (LKLI…KFSV). Residues cysteine 128 and cysteine 154 are joined by a disulfide bond. A helical membrane pass occupies residues 189 to 209 (LAFYEYGAGVPAGVWAMFCTV).

It belongs to the DsbB family. DsbI subfamily. Interacts with DsbL.

The protein resides in the cell inner membrane. Functionally, required for disulfide bond formation in some proteins. Part of a redox system composed of DsbI and DsbL that mediates formation of an essential disulfide bond in AssT. In Lelliottia amnigena (Enterobacter amnigenus), this protein is Protein-disulfide oxidoreductase DsbI.